The primary structure comprises 179 residues: uncharacterized protein (179 aa).

The segment at 160–179 is disordered; the sequence is QPIEPNGTQPATETKTPVGV. The segment covering 165 to 179 has biased composition (polar residues); that stretch reads NGTQPATETKTPVGV.

It belongs to the Dps family.

This is an uncharacterized protein from Anabaena variabilis.